The following is a 116-amino-acid chain: Putative BPES syndrome breakpoint region protein (116 aa).

Seems to be expressed only in testis.

The protein is Putative BPES syndrome breakpoint region protein (BPESC1) of Homo sapiens (Human).